We begin with the raw amino-acid sequence, 143 residues long: Small ribosomal subunit protein eS12 (143 aa).

It belongs to the eukaryotic ribosomal protein eS12 family. In terms of assembly, component of the small ribosomal subunit. Mature ribosomes consist of a small (40S) and a large (60S) subunit. The 40S subunit contains about 32 different proteins and 1 molecule of RNA (18S). The 60S subunit contains 45 different proteins and 3 molecules of RNA (25S, 5.8S and 5S).

The protein resides in the cytoplasm. Functionally, component of the ribosome, a large ribonucleoprotein complex responsible for the synthesis of proteins in the cell. The small ribosomal subunit (SSU) binds messenger RNAs (mRNAs) and translates the encoded message by selecting cognate aminoacyl-transfer RNA (tRNA) molecules. The large subunit (LSU) contains the ribosomal catalytic site termed the peptidyl transferase center (PTC), which catalyzes the formation of peptide bonds, thereby polymerizing the amino acids delivered by tRNAs into a polypeptide chain. The nascent polypeptides leave the ribosome through a tunnel in the LSU and interact with protein factors that function in enzymatic processing, targeting, and the membrane insertion of nascent chains at the exit of the ribosomal tunnel. This is Small ribosomal subunit protein eS12 (RPS12) from Candida albicans (strain SC5314 / ATCC MYA-2876) (Yeast).